A 502-amino-acid chain; its full sequence is UDP-N-acetylmuramoylalanine--D-glutamate ligase (502 aa).

136–142 (GTNGKTT) serves as a coordination point for ATP.

The protein belongs to the MurCDEF family.

It is found in the cytoplasm. The catalysed reaction is UDP-N-acetyl-alpha-D-muramoyl-L-alanine + D-glutamate + ATP = UDP-N-acetyl-alpha-D-muramoyl-L-alanyl-D-glutamate + ADP + phosphate + H(+). Its pathway is cell wall biogenesis; peptidoglycan biosynthesis. Functionally, cell wall formation. Catalyzes the addition of glutamate to the nucleotide precursor UDP-N-acetylmuramoyl-L-alanine (UMA). This chain is UDP-N-acetylmuramoylalanine--D-glutamate ligase, found in Corynebacterium jeikeium (strain K411).